The primary structure comprises 336 residues: tRNA N6-adenosine threonylcarbamoyltransferase (336 aa).

2 residues coordinate Fe cation: His112 and His116. Residues 136–140 (LVSGG), Asp169, Gly182, and Asn276 contribute to the substrate site. Asp304 lines the Fe cation pocket.

The protein belongs to the KAE1 / TsaD family. Fe(2+) is required as a cofactor.

Its subcellular location is the cytoplasm. It carries out the reaction L-threonylcarbamoyladenylate + adenosine(37) in tRNA = N(6)-L-threonylcarbamoyladenosine(37) in tRNA + AMP + H(+). Required for the formation of a threonylcarbamoyl group on adenosine at position 37 (t(6)A37) in tRNAs that read codons beginning with adenine. Is involved in the transfer of the threonylcarbamoyl moiety of threonylcarbamoyl-AMP (TC-AMP) to the N6 group of A37, together with TsaE and TsaB. TsaD likely plays a direct catalytic role in this reaction. The chain is tRNA N6-adenosine threonylcarbamoyltransferase from Francisella tularensis subsp. holarctica (strain LVS).